The sequence spans 1127 residues: Collagen alpha-2(I) chain (1127 aa).

Pro residues predominate over residues 1–16; it reads DGKPGLPGPAGPPGPP. Residues 1-1017 are disordered; the sequence is DGKPGLPGPA…GPAGPAGGGY (1017 aa). 3 stretches are compositionally biased toward low complexity: residues 171-191, 221-230, and 237-258; these read AGPA…AAGP, EPGPNGAVGP, and PGNN…AGAP. Residues 260–270 show a composition bias toward pro residues; the sequence is FPGPRGGPGPQ. A compositionally biased stretch (low complexity) spans 272-282; it reads PQGAAGQRGLA. The span at 289–298 shows a compositional bias: gly residues; it reads GVKGDGGPKG. Low complexity-rich tracts occupy residues 326-345, 355-398, 436-449, and 461-473; these read ATGP…RGMP, AAGP…AGPA, APGP…TGAT, and QGAA…QGLP. Positions 474-483 are enriched in gly residues; sequence GPAGGAGEAG. A compositionally biased stretch (low complexity) spans 508–518; sequence NPGAAGASGPQ. Residues 531-568 are compositionally biased toward gly residues; the sequence is GTDGGKGEPGAAGAAGGPGHQGPGGMPGERGAAGGPGG. The segment covering 569–580 has biased composition (basic and acidic residues); that stretch reads KGEKGEAGHRGP. Low complexity-rich tracts occupy residues 611-625 and 634-647; these read SGSF…ARGA and PAGA…PGAD. Residues 657 to 666 are compositionally biased toward gly residues; it reads GPSGGKGESG. Composition is skewed to low complexity over residues 667 to 692, 703 to 730, and 758 to 778; these read PSGP…TGAR, FPGA…PAGK, and SGEK…PLGL. Over residues 792-801 the composition is skewed to gly residues; that stretch reads GSPGGAGAVG. Composition is skewed to low complexity over residues 802-824 and 860-872; these read EAGR…LGLP and PGSS…AGAP. Over residues 876 to 897 the composition is skewed to gly residues; that stretch reads GPSGGAGRPGNRGESGPGGAAG. Residues 898-913 are compositionally biased toward low complexity; sequence AVGPAGARGAAGPSGP. Residues 914-928 show a composition bias toward basic and acidic residues; sequence RGEKGVAGEKGERGM. Composition is skewed to low complexity over residues 937 to 956 and 986 to 997; these read LQGM…AGPN and PGARGPPGYVGP. The span at 998–1010 shows a compositional bias: pro residues; sequence AGPPGXPGLPGPA. One can recognise a Fibrillar collagen NC1 domain in the interval 1093–1127; the sequence is RTNKPSRLPLLDLAPLDLGGADQEFGLDLGPVCFK.

The protein belongs to the fibrillar collagen family.

Its subcellular location is the secreted. It localises to the extracellular space. The protein localises to the extracellular matrix. The chain is Collagen alpha-2(I) chain from Epinephelus marginatus (Dusky grouper).